The chain runs to 372 residues: uncharacterized protein (372 aa).

S-adenosyl-L-methionine-binding positions include Asp-202 and 227–229 (GDF).

This sequence belongs to the class I-like SAM-binding methyltransferase superfamily. Cation-independent O-methyltransferase family.

This is an uncharacterized protein from Methanocaldococcus jannaschii (strain ATCC 43067 / DSM 2661 / JAL-1 / JCM 10045 / NBRC 100440) (Methanococcus jannaschii).